Consider the following 156-residue polypeptide: Small ribosomal subunit protein uS7 (156 aa).

The protein belongs to the universal ribosomal protein uS7 family. In terms of assembly, part of the 30S ribosomal subunit. Contacts proteins S9 and S11.

In terms of biological role, one of the primary rRNA binding proteins, it binds directly to 16S rRNA where it nucleates assembly of the head domain of the 30S subunit. Is located at the subunit interface close to the decoding center, probably blocks exit of the E-site tRNA. This is Small ribosomal subunit protein uS7 from Oceanobacillus iheyensis (strain DSM 14371 / CIP 107618 / JCM 11309 / KCTC 3954 / HTE831).